The primary structure comprises 697 residues: Polyribonucleotide nucleotidyltransferase (697 aa).

Mg(2+) is bound by residues Asp488 and Asp494. The 60-residue stretch at Pro555 to Ile614 folds into the KH domain. The region spanning Gly624–Lys692 is the S1 motif domain.

Belongs to the polyribonucleotide nucleotidyltransferase family. As to quaternary structure, component of the RNA degradosome, which is a multiprotein complex involved in RNA processing and mRNA degradation. Requires Mg(2+) as cofactor.

The protein resides in the cytoplasm. The enzyme catalyses RNA(n+1) + phosphate = RNA(n) + a ribonucleoside 5'-diphosphate. Its function is as follows. Involved in mRNA degradation. Catalyzes the phosphorolysis of single-stranded polyribonucleotides processively in the 3'- to 5'-direction. This is Polyribonucleotide nucleotidyltransferase from Acinetobacter baumannii (strain AB307-0294).